The primary structure comprises 89 residues: Putative acyl-CoA-binding protein (89 aa).

Residues 3-88 form the ACB domain; sequence VEEQFKTSAE…VKELVEKNGL (86 aa). An acyl-CoA is bound by residues Lys-15, 30 to 34, Lys-52, Lys-56, and Tyr-75; that span reads YSLYK.

Belongs to the ACBP family.

Binds medium- and long-chain acyl-CoA esters with very high affinity and may function as an intracellular carrier of acyl-CoA esters. The protein is Putative acyl-CoA-binding protein of Hypsibius exemplaris (Freshwater tardigrade).